We begin with the raw amino-acid sequence, 468 residues long: UDP-N-acetylmuramate--L-alanine ligase (468 aa).

112–118 (GTHGKTT) provides a ligand contact to ATP.

Belongs to the MurCDEF family.

It is found in the cytoplasm. The catalysed reaction is UDP-N-acetyl-alpha-D-muramate + L-alanine + ATP = UDP-N-acetyl-alpha-D-muramoyl-L-alanine + ADP + phosphate + H(+). It participates in cell wall biogenesis; peptidoglycan biosynthesis. Cell wall formation. The protein is UDP-N-acetylmuramate--L-alanine ligase of Neisseria meningitidis serogroup C (strain 053442).